Here is a 185-residue protein sequence, read N- to C-terminus: Protein-lysine palmitoyltransferase CyaC (185 aa).

Residues His33 and Asp102 contribute to the active site.

Belongs to the RTX toxin acyltransferase family. As to quaternary structure, homodimer.

It localises to the cytoplasm. The catalysed reaction is hexadecanoyl-[ACP] + L-lysyl-[protein] = N(6)-hexadecanoyl-L-lysyl-[protein] + holo-[ACP] + H(+). The enzyme catalyses (9Z)-hexadecenoyl-[ACP] + L-lysyl-[protein] = N(6)-[(9Z)-hexadecenoyl]-L-lysyl-[protein] + holo-[ACP] + H(+). Functionally, protein-lysine palmitoyltransferase that catalyzes palmitoylation of the protoxin (CyaA) at two internal lysine residues, thereby converting it to the active toxin. In Bordetella bronchiseptica (strain ATCC BAA-588 / NCTC 13252 / RB50) (Alcaligenes bronchisepticus), this protein is Protein-lysine palmitoyltransferase CyaC.